The following is a 137-amino-acid chain: Glutamate mutase sigma subunit (137 aa).

A B12-binding domain is found at glutamate 3–methionine 137. Adenosylcob(III)alamin-binding positions include alanine 13 to alanine 17, histidine 16, serine 61 to leucine 63, and asparagine 93 to glycine 97.

The protein belongs to the methylaspartate mutase GlmS subunit family. Heterotetramer composed of 2 epsilon subunits (GlmE) and 2 sigma subunits (GlmS). GlmE exists as a homodimer and GlmS as a monomer. Adenosylcob(III)alamin is required as a cofactor.

It catalyses the reaction (2S,3S)-3-methyl-L-aspartate = L-glutamate. It functions in the pathway amino-acid degradation; L-glutamate degradation via mesaconate pathway; acetate and pyruvate from L-glutamate: step 1/4. Functionally, catalyzes the carbon skeleton rearrangement of L-glutamate to L-threo-3-methylaspartate ((2S,3S)-3-methylaspartate). The protein is Glutamate mutase sigma subunit of Carboxydothermus hydrogenoformans (strain ATCC BAA-161 / DSM 6008 / Z-2901).